Here is a 55-residue protein sequence, read N- to C-terminus: KEGYIVNYHDGCKYECYKLGDNDYCLRECKLRVGKGAGGYCYAFACWCTHLYEQA.

The LCN-type CS-alpha/beta domain maps to K1 to A55. 3 disulfide bridges follow: C16-C41, C25-C46, and C29-C48.

The protein belongs to the long (3 C-C) scorpion toxin superfamily. Sodium channel inhibitor family. Beta subfamily. As to expression, expressed by the venom gland.

The protein localises to the secreted. Beta toxins bind voltage-independently at site-4 of sodium channels (Nav) and shift the voltage of activation toward more negative potentials thereby affecting sodium channel activation and promoting spontaneous and repetitive firing. This Centruroides noxius (Mexican scorpion) protein is Beta-toxin Cn7.